Reading from the N-terminus, the 197-residue chain is Probable chorismate pyruvate-lyase 2 (197 aa).

A compositionally biased stretch (basic and acidic residues) spans 1-14; it reads MRFDAADAHWRETP. The tract at residues 1–23 is disordered; it reads MRFDAADAHWRETPRPGASSAQK. 3 residues coordinate substrate: Arg73, Leu111, and Glu173.

The protein belongs to the UbiC family.

It is found in the cytoplasm. The catalysed reaction is chorismate = 4-hydroxybenzoate + pyruvate. Its pathway is cofactor biosynthesis; ubiquinone biosynthesis. Its function is as follows. Removes the pyruvyl group from chorismate, with concomitant aromatization of the ring, to provide 4-hydroxybenzoate (4HB) for the ubiquinone pathway. The protein is Probable chorismate pyruvate-lyase 2 of Burkholderia pseudomallei (strain 1710b).